The chain runs to 384 residues: Small ribosomal subunit protein mS31 (384 aa).

The transit peptide at 1–54 (MLHRIPAFLRPRPFSGLPLSCGNRDVSVAVLPAAQSGAVRTENNIQRHFCTSRS) directs the protein to the mitochondrion. Residues 101–136 (TANVKTPKPRGRKPSASLEATVDRLQKAPEDPPKKR) are disordered. A compositionally biased stretch (basic and acidic residues) spans 121 to 136 (TVDRLQKAPEDPPKKR).

Belongs to the mitochondrion-specific ribosomal protein mS31 family. As to quaternary structure, component of the mitochondrial ribosome small subunit (28S) which comprises a 12S rRNA and about 30 distinct proteins.

Its subcellular location is the mitochondrion. The polypeptide is Small ribosomal subunit protein mS31 (Mrps31) (Mus musculus (Mouse)).